A 192-amino-acid polypeptide reads, in one-letter code: Early nodulin-like protein 7 (192 aa).

The first 27 residues, 1–27 (MMMMMMRSTCNLTLMLCICALVVASMA), serve as a signal peptide directing secretion. In terms of domain architecture, Phytocyanin spans 32 to 134 (RDFKVGDEFG…GQRLIVEVMH (103 aa)). N-linked (GlcNAc...) asparagine glycans are attached at residues Asn48, Asn89, and Asn101. The cysteines at positions 88 and 122 are disulfide-linked. The GPI-anchor amidated serine moiety is linked to residue Ser166. Positions 167-192 (AASSLPTACLLIPLFLTIASFRFISY) are cleaved as a propeptide — removed in mature form.

The protein belongs to the early nodulin-like (ENODL) family. As to expression, mostly expressed in flowers, and, to a lower extent, in seeds, but barely in seedlings, stems, leaves and roots.

It is found in the cell membrane. May act as a carbohydrate transporter. This Arabidopsis thaliana (Mouse-ear cress) protein is Early nodulin-like protein 7.